The chain runs to 283 residues: 4-diphosphocytidyl-2-C-methyl-D-erythritol kinase (283 aa).

The active site involves Lys13. Pro96–Ser106 contacts ATP. Asp138 is an active-site residue.

Belongs to the GHMP kinase family. IspE subfamily.

It carries out the reaction 4-CDP-2-C-methyl-D-erythritol + ATP = 4-CDP-2-C-methyl-D-erythritol 2-phosphate + ADP + H(+). The protein operates within isoprenoid biosynthesis; isopentenyl diphosphate biosynthesis via DXP pathway; isopentenyl diphosphate from 1-deoxy-D-xylulose 5-phosphate: step 3/6. Catalyzes the phosphorylation of the position 2 hydroxy group of 4-diphosphocytidyl-2C-methyl-D-erythritol. This chain is 4-diphosphocytidyl-2-C-methyl-D-erythritol kinase, found in Pseudomonas fluorescens (strain Pf0-1).